Consider the following 265-residue polypeptide: Shikimate dehydrogenase (NADP(+)) (265 aa).

Residues 15–17 (SLS) and threonine 62 contribute to the shikimate site. Lysine 66 (proton acceptor) is an active-site residue. Shikimate-binding residues include asparagine 87 and aspartate 102. Residues 125–129 (GAGGA), 149–154 (NRTLEK), and leucine 209 contribute to the NADP(+) site. Position 211 (tyrosine 211) interacts with shikimate. Residue glycine 233 coordinates NADP(+).

This sequence belongs to the shikimate dehydrogenase family. Homodimer.

The catalysed reaction is shikimate + NADP(+) = 3-dehydroshikimate + NADPH + H(+). The protein operates within metabolic intermediate biosynthesis; chorismate biosynthesis; chorismate from D-erythrose 4-phosphate and phosphoenolpyruvate: step 4/7. Its function is as follows. Involved in the biosynthesis of the chorismate, which leads to the biosynthesis of aromatic amino acids. Catalyzes the reversible NADPH linked reduction of 3-dehydroshikimate (DHSA) to yield shikimate (SA). This chain is Shikimate dehydrogenase (NADP(+)), found in Legionella pneumophila (strain Corby).